Reading from the N-terminus, the 605-residue chain is Elongation factor 4 (605 aa).

Positions 4–186 (SSVRNFCIIA…AIVNKVPAPK (183 aa)) constitute a tr-type G domain. GTP is bound by residues 16–21 (DHGKST) and 133–136 (NKID).

Belongs to the TRAFAC class translation factor GTPase superfamily. Classic translation factor GTPase family. LepA subfamily.

The protein resides in the cell membrane. It carries out the reaction GTP + H2O = GDP + phosphate + H(+). Required for accurate and efficient protein synthesis under certain stress conditions. May act as a fidelity factor of the translation reaction, by catalyzing a one-codon backward translocation of tRNAs on improperly translocated ribosomes. Back-translocation proceeds from a post-translocation (POST) complex to a pre-translocation (PRE) complex, thus giving elongation factor G a second chance to translocate the tRNAs correctly. Binds to ribosomes in a GTP-dependent manner. The protein is Elongation factor 4 of Dehalococcoides mccartyi (strain ATCC BAA-2100 / JCM 16839 / KCTC 5957 / BAV1).